Reading from the N-terminus, the 423-residue chain is Protein CLP1 homolog (423 aa).

Residues Glu-16, Lys-57, and 119–124 contribute to the ATP site; that span reads DVGKST.

It belongs to the Clp1 family. Clp1 subfamily.

It is found in the nucleus. In terms of biological role, required for endonucleolytic cleavage during polyadenylation-dependent pre-mRNA 3'-end formation. The sequence is that of Protein CLP1 homolog (cbc) from Drosophila simulans (Fruit fly).